Here is an 86-residue protein sequence, read N- to C-terminus: Mu-theraphotoxin-Hhn1d (86 aa).

Residues 1–21 (MKASMFLALAGLALLFVVCYA) form the signal peptide. Residues 22–49 (SESEEKEFSNELLSSVLAVDDNSKGEER) constitute a propeptide that is removed on maturation. Disulfide bonds link C51–C66, C58–C73, and C65–C80. The residue at position 84 (I84) is an Isoleucine amide.

The protein belongs to the neurotoxin 10 (Hwtx-1) family. 22 (Htx-4) subfamily. Monomer. In terms of tissue distribution, expressed by the venom gland.

It localises to the secreted. In terms of biological role, neurotoxin. Selectively blocks neuronal tetrodotoxin-sensitive voltage-gated sodium channels (Nav). Does not affect tetrodotoxin-resistant voltage-gated sodium channels or calcium channels. The sequence is that of Mu-theraphotoxin-Hhn1d from Cyriopagopus hainanus (Chinese bird spider).